A 358-amino-acid polypeptide reads, in one-letter code: MPSRTQNIQSAWIGTTDGGSRLAHDAPIPAIARERVLIKTKAVSVSPVDSKLVGPYVTPNAVAGFDFSGIVEELGPEATKCGLKVGDRVCSAVVGMNPADPTIGAFAEYTAAVEWILLKLPPSITFEQGATLGISFLTSGLALFRSLGIPGRPLEPAPKPLCILVYGGSSSCGTASLQLLREAGHIPITTCSPHNFELVKSYGAVDAFDYNDPDTMDKIKKYTKNGLRYALDCISTTSSMQFCYKVIGRAGGKYTSLEPFSAAVAQTRKVVSPDWVMGPSLLGQEVAWPEPHYRKQDDDLAQFGAEWTATLNQLLKKELIKPHPMQIRDGGLENIQQGLEDLRAKKVSGAKIVYPLGS.

Val48–Lys51 provides a ligand contact to NADP(+). Residue Ile134 to Leu141 coordinates substrate. NADP(+)-binding positions include Ser169–Cys172, Ser192–Asn195, Tyr210, and Leu257–Glu258. Residue Gly278–Leu282 participates in substrate binding. Val347–Ser348 contacts NADP(+).

It belongs to the zinc-containing alcohol dehydrogenase family. In terms of assembly, monomer.

It participates in secondary metabolite biosynthesis. Trans-enoyl reductase; part of the gene cluster that mediates the biosynthesis of varicidin A, an antifungal natural product containing a cis-octahydrodecalin core. The PKS module of pvhA together with the enoylreductase pvhC catalyze the formation of the polyketide unit which is then conjugated to L-isoleucine by the condensation domain of the NRPS module. Activity of the Dieckmann cyclase domain (RED) of pvhA results in release of an acyclic tetramate. The cytochrome P450 monooxygenase pvhE then catalyzes the oxidation of the C21 methyl group to a to carboxylate group. The methyltransferase pvhD then further methylates the pvhE product. The Diels-Alderase pvhB is able to catalyze Diels-Alder cycloaddition using both pvhE and pvhD products as substrates to form the decalin ring, yielding varicidin B and A, respectively. This Talaromyces variabilis (Penicillium variabile) protein is Trans-enoyl reductase pvhC.